The sequence spans 908 residues: Low affinity vacuolar monovalent cation/H(+) antiporter (908 aa).

Residues 1-15 (MAKNNHISASGNSTS) show a composition bias toward polar residues. Positions 1 to 20 (MAKNNHISASGNSTSGDHRL) are disordered. Topologically, residues 1–244 (MAKNNHISAS…WEVTCSNVLW (244 aa)) are cytoplasmic. At threonine 26 the chain carries Phosphothreonine. Serine 32 is subject to Phosphoserine. Residue threonine 33 is modified to Phosphothreonine. The interval 68-147 (NKSKRSVSSQ…DDEDANDDSR (80 aa)) is disordered. A compositionally biased stretch (low complexity) spans 73–87 (SVSSQSPIVHSSNNT). Residues 102-121 (ESLSSKSHSVPDLNTATPSS) show a composition bias toward polar residues. A Phosphoserine modification is found at serine 110. At threonine 118 the chain carries Phosphothreonine. Serine 121 bears the Phosphoserine mark. The helical transmembrane segment at 245–265 (FILFGFPIAILFYSAAIVVFL) threads the bilayer. Residues 266 to 408 (LGGGGLVTNS…GRVLFYTIFH (143 aa)) lie on the Vacuolar side of the membrane. Residue asparagine 361 is glycosylated (N-linked (GlcNAc...) asparagine). A helical membrane pass occupies residues 409–429 (LVLQPILAVLSLCLWLLVFTI). Over 430–494 (PMSNVLWQIM…HYYKYTVDGT (65 aa)) the chain is Cytoplasmic. Residues 495 to 515 (NVIVVNLISIVFFTIFDFYVL) form a helical membrane-spanning segment. At 516 to 530 (KNFLHWKTWFTYESS) the chain is on the vacuolar side. Residues 531–551 (IFILCLTSTIPLAFYIGQAVA) form a helical membrane-spanning segment. Topologically, residues 552 to 560 (SISAQTSMG) are cytoplasmic. Residues 561–581 (VGAVINAFFSTIVEIFLYCVA) form a helical membrane-spanning segment. Topologically, residues 582-587 (LQQKKG) are vacuolar. A helical membrane pass occupies residues 588-608 (LLVEGSMIGSILGAVLLLPGL). Residues 609–626 (SMCGGALNRKTQRYNPAS) are Cytoplasmic-facing. The chain crosses the membrane as a helical span at residues 627–647 (AGVSSALLIFSMIVMFVPTVL). Over 648–686 (YEIYGGYSVNCADGANDRDCTFSHPPLKFNRLFTHVIQP) the chain is Vacuolar. The chain crosses the membrane as a helical span at residues 687–707 (MSISCAIVLFCAYIIGLWFTL). At 708–746 (RTHAKMIWQLPIADPTSTAPEQQEQNSHDAPNWSRSKST) the chain is on the cytoplasmic side. Residues 747-767 (CILLMSTLLYAIIAEILVSCV) form a helical membrane-spanning segment. The Vacuolar segment spans residues 768–783 (DAVLEDIPSLNPKFLG). Residues 784–804 (LTIFALIPNTTEFLNAISFAI) traverse the membrane as a helical segment. The Cytoplasmic segment spans residues 805–816 (HGNVALSMEIGS). Residues 817 to 837 (AYALQVCLLQIPSLVIYSIFY) traverse the membrane as a helical segment. The Vacuolar portion of the chain corresponds to 838 to 851 (TWNVKKSMINIRTQ). The helical transmembrane segment at 852 to 872 (MFPLVFPRWDIFGAMTSVFMF) threads the bilayer. Residues 873–885 (TYLYAEGKSNYFK) lie on the Cytoplasmic side of the membrane. A helical transmembrane segment spans residues 886 to 906 (GSMLILLYIIIVVGFYFQGAL). Residues 907–908 (SE) are Vacuolar-facing.

It belongs to the Ca(2+):cation antiporter (CaCA) (TC 2.A.19) family.

Its subcellular location is the vacuole membrane. Has a role in promoting intracellular monovalent cation sequestration via the exchange of monovalent cations and especially Na(+) for hydrogen ions across the vacuolar membrane. This is Low affinity vacuolar monovalent cation/H(+) antiporter (VNX1) from Saccharomyces cerevisiae (strain ATCC 204508 / S288c) (Baker's yeast).